A 190-amino-acid chain; its full sequence is Endoribonuclease YbeY (190 aa).

His-147, His-151, and His-157 together coordinate Zn(2+).

This sequence belongs to the endoribonuclease YbeY family. Requires Zn(2+) as cofactor.

Its subcellular location is the cytoplasm. Functionally, single strand-specific metallo-endoribonuclease involved in late-stage 70S ribosome quality control and in maturation of the 3' terminus of the 16S rRNA. The polypeptide is Endoribonuclease YbeY (Nitrobacter winogradskyi (strain ATCC 25391 / DSM 10237 / CIP 104748 / NCIMB 11846 / Nb-255)).